A 510-amino-acid polypeptide reads, in one-letter code: Myosin-binding protein C, cardiac-type (510 aa).

Ig-like C2-type domains are found at residues 177-269 (KKST…VKEP), 270-347 (PYSS…TVKT), and 378-438 (RDQA…SFIP).

It belongs to the immunoglobulin superfamily. MyBP family. In terms of tissue distribution, heart.

In terms of biological role, thick filament-associated protein located in the crossbridge region of vertebrate striated muscle a bands. In vitro it binds MHC, F-actin and native thin filaments, and modifies the activity of actin-activated myosin ATPase. It may modulate muscle contraction or may play a more structural role. This is Myosin-binding protein C, cardiac-type from Ambystoma mexicanum (Axolotl).